Reading from the N-terminus, the 427-residue chain is 3-phosphoshikimate 1-carboxyvinyltransferase (427 aa).

Residues lysine 22, serine 23, and arginine 27 each contribute to the 3-phosphoshikimate site. Lysine 22 lines the phosphoenolpyruvate pocket. Residues glycine 96 and arginine 124 each coordinate phosphoenolpyruvate. 3-phosphoshikimate-binding residues include serine 169, serine 170, glutamine 171, serine 197, aspartate 313, asparagine 336, and lysine 340. A phosphoenolpyruvate-binding site is contributed by glutamine 171. Aspartate 313 acts as the Proton acceptor in catalysis. Phosphoenolpyruvate contacts are provided by arginine 344, arginine 386, and lysine 411.

Belongs to the EPSP synthase family. As to quaternary structure, monomer.

It localises to the cytoplasm. It catalyses the reaction 3-phosphoshikimate + phosphoenolpyruvate = 5-O-(1-carboxyvinyl)-3-phosphoshikimate + phosphate. It participates in metabolic intermediate biosynthesis; chorismate biosynthesis; chorismate from D-erythrose 4-phosphate and phosphoenolpyruvate: step 6/7. Its function is as follows. Catalyzes the transfer of the enolpyruvyl moiety of phosphoenolpyruvate (PEP) to the 5-hydroxyl of shikimate-3-phosphate (S3P) to produce enolpyruvyl shikimate-3-phosphate and inorganic phosphate. In Salmonella arizonae (strain ATCC BAA-731 / CDC346-86 / RSK2980), this protein is 3-phosphoshikimate 1-carboxyvinyltransferase.